A 353-amino-acid chain; its full sequence is Mitochondrial ubiquitin ligase activator of nfkb 1 (353 aa).

Over 1-8 (MENGGRPS) the chain is Cytoplasmic. A helical transmembrane segment spans residues 9 to 29 (VGQVILLTTSSAITALFYSIY). Residues 30–239 (RHKYRSVQTL…LLEKQEVQMR (210 aa)) lie on the Mitochondrial intermembrane side of the membrane. A helical membrane pass occupies residues 240-260 (WWRILSIVFGVASCITLFFIL). The Cytoplasmic segment spans residues 261–353 (RRKYRHYKEK…IDRIVPLYNS (93 aa)). The RING-type zinc-finger motif lies at 303-341 (CSICLSTEKSCVFLECGHVCSCISCYQALPSPKKCPICR).

As to quaternary structure, homooligomer.

It is found in the mitochondrion outer membrane. The catalysed reaction is S-ubiquitinyl-[E2 ubiquitin-conjugating enzyme]-L-cysteine + [acceptor protein]-L-lysine = [E2 ubiquitin-conjugating enzyme]-L-cysteine + N(6)-ubiquitinyl-[acceptor protein]-L-lysine.. It participates in protein modification; protein ubiquitination. Functionally, E3 ubiquitin-protein ligase that plays a role in the control of mitochondrial morphology. Promotes mitochondrial fragmentation and influences mitochondrial localization. Inhibits cell growth. E3 ubiquitin ligases accept ubiquitin from an E2 ubiquitin-conjugating enzyme in the form of a thioester and then directly transfer the ubiquitin to targeted substrates. The chain is Mitochondrial ubiquitin ligase activator of nfkb 1 (mul1) from Xenopus laevis (African clawed frog).